Reading from the N-terminus, the 236-residue chain is 2,3,4,5-tetrahydropyridine-2,6-dicarboxylate N-acetyltransferase (236 aa).

It belongs to the transferase hexapeptide repeat family. DapH subfamily.

It carries out the reaction (S)-2,3,4,5-tetrahydrodipicolinate + acetyl-CoA + H2O = L-2-acetamido-6-oxoheptanedioate + CoA. It functions in the pathway amino-acid biosynthesis; L-lysine biosynthesis via DAP pathway; LL-2,6-diaminopimelate from (S)-tetrahydrodipicolinate (acetylase route): step 1/3. Its function is as follows. Catalyzes the transfer of an acetyl group from acetyl-CoA to tetrahydrodipicolinate. The protein is 2,3,4,5-tetrahydropyridine-2,6-dicarboxylate N-acetyltransferase of Limosilactobacillus reuteri (strain DSM 20016) (Lactobacillus reuteri).